The following is a 379-amino-acid chain: Alternative oxidase 1, mitochondrial (379 aa).

The span at 33–50 (TTTTSTKSRSSTSTAATT) shows a compositional bias: low complexity. Residues 33–76 (TTTTSTKSRSSTSTAATTVGNSNPKSPIDEDNLEKPGTIPTKHK) form a disordered region. Fe cation contacts are provided by Glu-180, Glu-219, and His-222. A helical transmembrane segment spans residues 234–256 (WFTRSIIYIGQGVFTNIFFLVYL). Residues Glu-270, Glu-271, Glu-326, and His-329 each coordinate Fe cation.

Belongs to the alternative oxidase family. Fe cation serves as cofactor.

The protein localises to the mitochondrion inner membrane. Functionally, catalyzes cyanide-resistant oxygen consumption. May increase respiration when the cytochrome respiratory pathway is restricted, or in response to low temperatures. The protein is Alternative oxidase 1, mitochondrial (AOX1) of Candida albicans (Yeast).